We begin with the raw amino-acid sequence, 234 residues long: Large ribosomal subunit protein bL25 (234 aa).

Belongs to the bacterial ribosomal protein bL25 family. CTC subfamily. As to quaternary structure, part of the 50S ribosomal subunit; part of the 5S rRNA/L5/L18/L25 subcomplex. Contacts the 5S rRNA. Binds to the 5S rRNA independently of L5 and L18.

Functionally, this is one of the proteins that binds to the 5S RNA in the ribosome where it forms part of the central protuberance. This chain is Large ribosomal subunit protein bL25, found in Rhodopseudomonas palustris (strain BisA53).